The following is a 1116-amino-acid chain: Surface layer protein (1116 aa).

Positions 1–53 (MQDSGFKKKDRSTNIPQEQFVYTRGGEHKVMKKVVNSVLASALAITVAPMAFA) are cleaved as a signal peptide. 3 consecutive SLH domains span residues 54–117 (AEDT…KLAQ), 118–181 (FNTT…RGVW), and 182–231 (PNSM…YGTD).

The protein localises to the secreted. Its subcellular location is the cell wall. The protein resides in the S-layer. In Brevibacillus choshinensis, this protein is Surface layer protein.